The following is a 545-amino-acid chain: Glucose-6-phosphate isomerase (545 aa).

Glu351 (proton donor) is an active-site residue. Residues His382 and Lys510 contribute to the active site.

The protein belongs to the GPI family.

It is found in the cytoplasm. It catalyses the reaction alpha-D-glucose 6-phosphate = beta-D-fructose 6-phosphate. The protein operates within carbohydrate biosynthesis; gluconeogenesis. It participates in carbohydrate degradation; glycolysis; D-glyceraldehyde 3-phosphate and glycerone phosphate from D-glucose: step 2/4. Functionally, catalyzes the reversible isomerization of glucose-6-phosphate to fructose-6-phosphate. The sequence is that of Glucose-6-phosphate isomerase from Shewanella denitrificans (strain OS217 / ATCC BAA-1090 / DSM 15013).